Consider the following 130-residue polypeptide: uncharacterized protein (130 aa).

The tract at residues 23 to 130 (SHLRLLPTAN…GAHQLSSPSS (108 aa)) is disordered. Polar residues predominate over residues 30 to 45 (TANSPSGSNQPTNPNR).

This is an uncharacterized protein from Homo sapiens (Human).